Reading from the N-terminus, the 430-residue chain is Glutamate-1-semialdehyde 2,1-aminomutase 2 (430 aa).

Position 268 is an N6-(pyridoxal phosphate)lysine (lysine 268).

The protein belongs to the class-III pyridoxal-phosphate-dependent aminotransferase family. HemL subfamily. In terms of assembly, homodimer. Pyridoxal 5'-phosphate is required as a cofactor.

It is found in the cytoplasm. It carries out the reaction (S)-4-amino-5-oxopentanoate = 5-aminolevulinate. It functions in the pathway porphyrin-containing compound metabolism; protoporphyrin-IX biosynthesis; 5-aminolevulinate from L-glutamyl-tRNA(Glu): step 2/2. The polypeptide is Glutamate-1-semialdehyde 2,1-aminomutase 2 (Shouchella clausii (strain KSM-K16) (Alkalihalobacillus clausii)).